The following is a 134-amino-acid chain: ATP synthase epsilon chain (134 aa).

This sequence belongs to the ATPase epsilon chain family. As to quaternary structure, F-type ATPases have 2 components, CF(1) - the catalytic core - and CF(0) - the membrane proton channel. CF(1) has five subunits: alpha(3), beta(3), gamma(1), delta(1), epsilon(1). CF(0) has three main subunits: a, b and c.

It is found in the cell membrane. Produces ATP from ADP in the presence of a proton gradient across the membrane. In Staphylococcus aureus (strain USA300), this protein is ATP synthase epsilon chain.